The sequence spans 291 residues: GTPase Era (291 aa).

The Era-type G domain maps to 2 to 167; it reads KSGFVSIIGR…LDEIVKCLNE (166 aa). The tract at residues 10–17 is G1; sequence GRTNAGKS. 10–17 provides a ligand contact to GTP; the sequence is GRTNAGKS. The segment at 36-40 is G2; that stretch reads NATRR. The interval 57-60 is G3; sequence DTPG. Residues 57 to 61 and 116 to 119 contribute to the GTP site; these read DTPGL and NKVD. The interval 116–119 is G4; that stretch reads NKVD. Positions 146–148 are G5; the sequence is YSS. Residues 186 to 274 enclose the KH type-2 domain; it reads YRDFILESIY…LLKLFVTVKK (89 aa).

This sequence belongs to the TRAFAC class TrmE-Era-EngA-EngB-Septin-like GTPase superfamily. Era GTPase family. Monomer.

Its subcellular location is the cytoplasm. The protein resides in the cell inner membrane. Its function is as follows. An essential GTPase that binds both GDP and GTP, with rapid nucleotide exchange. Plays a role in 16S rRNA processing and 30S ribosomal subunit biogenesis and possibly also in cell cycle regulation and energy metabolism. The chain is GTPase Era from Campylobacter jejuni subsp. doylei (strain ATCC BAA-1458 / RM4099 / 269.97).